A 208-amino-acid chain; its full sequence is 3-demethoxyubiquinol 3-hydroxylase (208 aa).

Fe cation contacts are provided by Glu-57, Glu-87, His-90, Glu-139, Glu-171, and His-174.

Belongs to the COQ7 family. Fe cation is required as a cofactor.

It localises to the cell membrane. It carries out the reaction a 5-methoxy-2-methyl-3-(all-trans-polyprenyl)benzene-1,4-diol + AH2 + O2 = a 3-demethylubiquinol + A + H2O. Its pathway is cofactor biosynthesis; ubiquinone biosynthesis. Its function is as follows. Catalyzes the hydroxylation of 2-nonaprenyl-3-methyl-6-methoxy-1,4-benzoquinol during ubiquinone biosynthesis. This chain is 3-demethoxyubiquinol 3-hydroxylase, found in Nitrosospira multiformis (strain ATCC 25196 / NCIMB 11849 / C 71).